Reading from the N-terminus, the 557-residue chain is Probable tRNA-splicing endonuclease subunit tsp-5 (557 aa).

Disordered stretches follow at residues 1-36 (MPLD…MMDE), 131-152 (KLTK…DRKL), 225-252 (SVPA…EDDD), 370-403 (PSST…SDSP), and 514-557 (SGGP…GRGN). Over residues 131–140 (KLTKRGKEGA) the composition is skewed to basic and acidic residues. Over residues 370-381 (PSSTSSSASPTA) the composition is skewed to low complexity. Gly residues-rich tracts occupy residues 517–527 (PRRGGGGGGKK) and 538–549 (GRGGGRGGGRGG).

The protein belongs to the SEN54 family. In terms of assembly, tRNA splicing endonuclease is a heterotetramer composed of tsp-2/sen2, tsp-1/sen15, tsp-4/sen34 and tsp-5/sen54. Interacts directly with tsp-2/sen2.

Non-catalytic subunit of the tRNA-splicing endonuclease complex, a complex responsible for identification and cleavage of the splice sites in pre-tRNA. It cleaves pre-tRNA at the 5' and 3' splice sites to release the intron. The products are an intron and two tRNA half-molecules bearing 2',3' cyclic phosphate and 5'-OH termini. There are no conserved sequences at the splice sites, but the intron is invariably located at the same site in the gene, placing the splice sites an invariant distance from the constant structural features of the tRNA body. May be required to embody the molecular ruler of the complex. The polypeptide is Probable tRNA-splicing endonuclease subunit tsp-5 (tsp-5) (Neurospora crassa (strain ATCC 24698 / 74-OR23-1A / CBS 708.71 / DSM 1257 / FGSC 987)).